The chain runs to 183 residues: Archaemetzincin (183 aa).

His132 serves as a coordination point for Zn(2+). Catalysis depends on Glu133, which acts as the Proton acceptor. Zn(2+) contacts are provided by His136, His142, Cys143, Cys148, Cys167, and Cys170.

The protein belongs to the peptidase M54 family. As to quaternary structure, monomer. It depends on Zn(2+) as a cofactor.

Probable zinc metalloprotease whose natural substrate is unknown. This is Archaemetzincin from Aeropyrum pernix (strain ATCC 700893 / DSM 11879 / JCM 9820 / NBRC 100138 / K1).